Here is a 78-residue protein sequence, read N- to C-terminus: Putative protein PeaD (78 aa).

It belongs to the phage P protein family.

This chain is Putative protein PeaD (peaD), found in Escherichia coli (strain K12).